Here is a 1171-residue protein sequence, read N- to C-terminus: 7,8-linoleate diol synthase (1171 aa).

Residues 1-22 show a composition bias toward low complexity; sequence MASSSSSGSSTRSSSPSDPPSS. Positions 1–56 are disordered; it reads MASSSSSGSSTRSSSPSDPPSSFFQKLGAFLGLFSKPQPPRPDYPHAPGNSAREEQ. A fatty acid alpha-dioxygenase region spans residues 114 to 457; the sequence is TDGLITGLWE…DGSFEDEGLI (344 aa). His213 is a binding site for heme b. The Ca(2+) site is built by Asp214, Ser229, Tyr231, Asp233, and Ser235. Residue Tyr385 is part of the active site. His388 contributes to the heme b binding site. Positions 675 to 1171 are epoxy alcohol synthase; that stretch reads KILNNQKDFK…PMNMKIRWDD (497 aa). Residues 873 to 900 form a disordered region; sequence GLANGGANGHANGNANGHTNGNGIHQNG. Residues 881 to 895 are compositionally biased toward low complexity; sequence GHANGNANGHTNGNG. Cys1089 serves as a coordination point for heme.

The protein in the N-terminal section; belongs to the peroxidase family. It in the C-terminal section; belongs to the cytochrome P450 family. Homotetramer. It depends on heme b as a cofactor. Ca(2+) serves as cofactor. Requires heme as cofactor.

It catalyses the reaction (9Z,12Z)-octadecadienoate + O2 = (8R,9Z,12Z)-8-hydroperoxyoctadeca-9,12-dienoate. The enzyme catalyses (8R,9Z,12Z)-8-hydroperoxyoctadeca-9,12-dienoate = (7S,8S,9Z,12Z)-7,8-dihydroxyoctadeca-9,12-dienoate. Functionally, 7,8-linoleate diol synthase is a bifunctional enzyme that converts linoleic acid (18:2n-6) into 8-hydroperoxy-8(E),12(Z)-octadecadienoic acid (8-HPODE) and then catalyzes the isomerization of the resulting hydroperoxide to 7,8-dihydroxy-9(Z),12(Z)-octadecadienoic acid (7,8-DiHODE). This is 7,8-linoleate diol synthase from Pyricularia oryzae (strain 70-15 / ATCC MYA-4617 / FGSC 8958) (Rice blast fungus).